Reading from the N-terminus, the 594-residue chain is Cationic amino acid transporter 1 (594 aa).

A2 is modified (N-acetylalanine). The Cytoplasmic segment spans residues 2–78 (ASGGGDDGLR…EMKKTLTWWD (77 aa)). A helical transmembrane segment spans residues 79–99 (LMWFGIGAVIGSGIFVLTGLE). Topologically, residues 100–104 (ARNHS) are extracellular. N-linked (GlcNAc...) asparagine glycosylation occurs at N102. Residues 105 to 125 (GPAVVLSYVVSGVSAMLSVFC) traverse the membrane as a helical segment. Residues 126-149 (YTEFAVEIPVAGGSFAYLRVELGD) lie on the Cytoplasmic side of the membrane. The chain crosses the membrane as a helical span at residues 150-170 (FMAFIAAGNIILEYVVGGAAV). The Extracellular segment spans residues 171–201 (ARSWTSYFATLLNHKPEDFRIIVHKLGEDYS). The helical transmembrane segment at 202-222 (HLDPIAVGVCAIICVLAVVGT) threads the bilayer. Residues 223–227 (KGSSR) are Cytoplasmic-facing. A helical membrane pass occupies residues 228–248 (FNYIASIIHMVVILFVIIAGF). Topologically, residues 249–266 (TKADVKNYSDFTPYGVRG) are extracellular. A glycan (N-linked (GlcNAc...) asparagine) is linked at N255. Residues 267–287 (VFKSAAVLFFAYIGFDAVSTM) traverse the membrane as a helical segment. Topologically, residues 288–297 (AEETKNPGRD) are cytoplasmic. A helical transmembrane segment spans residues 298–318 (IPIGLVGSMVVTTVCYCLMAV). Topologically, residues 319–348 (TLCLMQPYQQIDPDAPFSVAFSAVGWDWAK) are extracellular. Residues 349-369 (YIVAFGALKGMTTVLLVGAIG) form a helical membrane-spanning segment. Residues 370 to 393 (QARYMTHIARAHMMPPWLAQVNAK) are Cytoplasmic-facing. Residues 394–414 (TGTPINATVVMLAATALIAFF) traverse the membrane as a helical segment. The Extracellular segment spans residues 415-418 (TKLK). Residues 419 to 439 (ILADLLSVSTLFIFMFVAVAL) form a helical membrane-spanning segment. Residues 440–457 (LVRRYYVTGETSTRDRNK) lie on the Cytoplasmic side of the membrane. Residues 458-478 (FLVFLGLILASSTATAVYWAL) form a helical membrane-spanning segment. The Extracellular portion of the chain corresponds to 479 to 483 (EEEGW). A helical transmembrane segment spans residues 484–504 (IGYCITVPIWFLSTVAMKFLV). Over 505 to 511 (PQARAPK) the chain is Cytoplasmic. A helical transmembrane segment spans residues 512–532 (IWGVPLVPWLPSASIAINIFL). Residues 533–543 (LGSIDTKSFVR) lie on the Extracellular side of the membrane. Residues 544–564 (FAIWTGILLIYYVLFGLHATY) traverse the membrane as a helical segment. The Cytoplasmic portion of the chain corresponds to 565–594 (DTAKATLKEKQALQKAEEGGVVADNSCSAT).

The protein belongs to the amino acid-polyamine-organocation (APC) superfamily. Cationic amino acid transporter (CAT) (TC 2.A.3.3) family. As to expression, expressed in roots, stems, flowers, petioles, seeds, siliques, and leaves. Mostly present in major veins.

The protein resides in the membrane. Its activity is regulated as follows. Inhibited by the protonophore 2,4-dinitrophenol. In terms of biological role, high-affinity permease involved in the transport of the cationic amino acids (e.g. arginine, lysine, histidine, citrulline, valine, and glutamate). Transport mostly basic amino acids, and, to a lower extent neutral and acidic amino acids. May function as a proton symporter. This Arabidopsis thaliana (Mouse-ear cress) protein is Cationic amino acid transporter 1 (CAT1).